The primary structure comprises 361 residues: Chalcone synthase A (361 aa).

Cysteine 168 is a catalytic residue.

The protein belongs to the thiolase-like superfamily. Chalcone/stilbene synthases family.

The catalysed reaction is (E)-4-coumaroyl-CoA + 3 malonyl-CoA + 3 H(+) = 2',4,4',6'-tetrahydroxychalcone + 3 CO2 + 4 CoA. It participates in secondary metabolite biosynthesis; flavonoid biosynthesis. Its function is as follows. The primary product of this enzyme is 4,2',4',6'-tetrahydroxychalcone (also termed naringenin-chalcone or chalcone) which can under specific conditions spontaneously isomerize into naringenin. The polypeptide is Chalcone synthase A (CHSA) (Ipomoea cordatotriloba (Tievine)).